The following is a 264-amino-acid chain: CD320 antigen (264 aa).

Positions 1–28 (MARCGAGRAAALGLVLRLLLGLRTGPEA) are cleaved as a signal peptide. The 38-residue stretch at 50–87 (SCPTDTFKCLTSGYCVPLSWRCDGDRDCSDGSDEEECR) folds into the LDL-receptor class A 1 domain. Disulfide bonds link C51–C64, C58–C77, and C71–C86. Ca(2+)-binding residues include W69, D72, D74, D76, D82, and E83. N-linked (GlcNAc...) asparagine glycosylation occurs at N122. Positions 127-164 (PCQEGELRCILDDVCIPHTWRCDGHPDCPDSSDELSCD) constitute an LDL-receptor class A 2 domain. Intrachain disulfides connect C128–C141, C135–C154, and C148–C163. Ca(2+) is bound by residues W146, D149, H151, D153, D159, and E160. The N-linked (GlcNAc...) asparagine glycan is linked to N195. Residues 213-233 (VIAAAGVLSAILVSATILILL) traverse the membrane as a helical segment.

In terms of assembly, interacts (via LDL-receptor class A domains) with TCN2.

It localises to the cell membrane. Its function is as follows. Receptor for transcobalamin saturated with cobalamin (TCbl). Plays an important role in cobalamin uptake. Plasma membrane protein that is expressed on follicular dendritic cells (FDC) and mediates interaction with germinal center B cells. Functions as a costimulator to promote B cell responses to antigenic stimuli; promotes B cell differentiation and proliferation. Germinal center-B (GC-B) cells differentiate into memory B-cells and plasma cells (PC) through interaction with T-cells and follicular dendritic cells (FDC). CD320 augments the proliferation of PC precursors generated by IL-10. The sequence is that of CD320 antigen (Cd320) from Rattus norvegicus (Rat).